A 740-amino-acid polypeptide reads, in one-letter code: Ribulose bisphosphate carboxylase, chloroplastic (740 aa).

The transit peptide at 1-55 directs the protein to the chloroplast; the sequence is MPSSSFTTGLALGAGALVGANAFVAPTAKTTNLRAPTQEASLQVAASQQTEQPAP. A helical membrane pass occupies residues 56 to 76; sequence STSALPWAFGAGACLALAAGG. Residue Asn-213 participates in substrate binding. Lys-268 serves as the catalytic Proton acceptor. A substrate-binding site is contributed by Lys-270. 3 residues coordinate Mg(2+): Lys-293, Asp-295, and Glu-296. An N6-carboxylysine modification is found at Lys-293. Catalysis depends on His-389, which acts as the Proton acceptor. Residues Arg-390, His-423, and Ser-470 each contribute to the substrate site.

Belongs to the RuBisCO large chain family. Type II subfamily. Homodimer. Requires Mg(2+) as cofactor.

Its subcellular location is the plastid. The protein resides in the chloroplast membrane. It catalyses the reaction 2 (2R)-3-phosphoglycerate + 2 H(+) = D-ribulose 1,5-bisphosphate + CO2 + H2O. The catalysed reaction is D-ribulose 1,5-bisphosphate + O2 = 2-phosphoglycolate + (2R)-3-phosphoglycerate + 2 H(+). Functionally, ruBisCO catalyzes two reactions: the carboxylation of D-ribulose 1,5-bisphosphate, the primary event in carbon dioxide fixation, as well as the oxidative fragmentation of the pentose substrate. Both reactions occur simultaneously and in competition at the same active site. In Heterocapsa triquetra (Dinoflagellate), this protein is Ribulose bisphosphate carboxylase, chloroplastic (rbcL).